The following is a 620-amino-acid chain: Threonine--tRNA ligase (620 aa).

Residues 1–141 (MKMLLIHSDY…LSRKIVAKEE (141 aa)) form an editing domain region. Positions 197–496 (PHVKFIKEKD…AEKGNAPMLP (300 aa)) are catalytic. 3 residues coordinate Zn(2+): Cys-289, His-341, and His-465.

It belongs to the class-II aminoacyl-tRNA synthetase family. Homodimer. It depends on Zn(2+) as a cofactor.

The protein localises to the cytoplasm. The enzyme catalyses tRNA(Thr) + L-threonine + ATP = L-threonyl-tRNA(Thr) + AMP + diphosphate + H(+). With respect to regulation, not inhibited by 1 uM borrelidin (BN); probably does not bind BN. Functionally, catalyzes the attachment of threonine to tRNA(Thr) in a two-step reaction: L-threonine is first activated by ATP to form Thr-AMP and then transferred to the acceptor end of tRNA(Thr). Also activates L-serine, but does not detectably transfer it to tRNA(Thr). Edits incorrectly charged L-seryl-tRNA(Thr) via its editing domain. Has no activity on correctly acylated L-seryl-tRNA(Ser) or L-threonyl-tRNA(Thr). Deacylates correctly charged glycyl-tRNA(Gly), but not glycyl-tRNA(Gly)(2'-dA76) (the terminal 2'-OH of tRNA adenine 76 has been dehydroxylated) nor the 2'-fluoro tRNA derivative, strongly suggesting the editing function is tRNA catalyzed. This is Threonine--tRNA ligase from Methanocaldococcus jannaschii (strain ATCC 43067 / DSM 2661 / JAL-1 / JCM 10045 / NBRC 100440) (Methanococcus jannaschii).